Consider the following 784-residue polypeptide: Ubiquitin carboxyl-terminal hydrolase 1 (784 aa).

2 disordered regions span residues 1–21 (MPGV…SKKN) and 33–54 (TKRA…EYRG). Residues 7-16 (SESNGLSRGS) show a composition bias toward polar residues. Phosphoserine is present on residues Ser-16, Ser-42, and Ser-67. The 704-residue stretch at 81–784 (VGLNNLGNTC…TPYLLFYKKL (704 aa)) folds into the USP domain. Catalysis depends on Cys-90, which acts as the Nucleophile. Composition is skewed to basic and acidic residues over residues 232-243 (KVEEKSLQKEET) and 252-264 (DSTR…KEQL). Disordered regions lie at residues 232 to 341 (KVEE…KINW) and 363 to 411 (TNQR…SSEA). Residues 389-407 (NTVNGSGPASPGSSVTPVD) show a composition bias toward polar residues. Position 475 is a phosphoserine (Ser-475). Catalysis depends on His-593, which acts as the Proton acceptor. The disordered stretch occupies residues 686–723 (PEKVVGTPFTDSRNSETNDTNGTQESDRSKESSDQTGI). The span at 694 to 709 (FTDSRNSETNDTNGTQ) shows a compositional bias: polar residues. The residue at position 767 (Ser-767) is a Phosphoserine.

This sequence belongs to the peptidase C19 family. As to quaternary structure, interacts with FANCD2 and PCNA. Interacts with WDR48. Interacts with ATAD5; the interaction regulates USP1-mediated PCNA deubiquitination. Autocatalytic cleavage of USP1 following UV irradiation inactivates it, leading to an increase in ubiquitinated PCNA, recruitment of POLH and translesion synthesis. In terms of processing, ubiquitinated by the CRL2(KLHDC2) complex following autocatalytic cleavage, leading to its degradation: the CRL2(KLHDC2) complex recognizes the diglycine (Gly-Gly) at the C-terminus.

The protein localises to the nucleus. The enzyme catalyses Thiol-dependent hydrolysis of ester, thioester, amide, peptide and isopeptide bonds formed by the C-terminal Gly of ubiquitin (a 76-residue protein attached to proteins as an intracellular targeting signal).. Its function is as follows. Negative regulator of DNA damage repair which specifically deubiquitinates monoubiquitinated FANCD2. Also involved in PCNA-mediated translesion synthesis (TLS) by deubiquitinating monoubiquitinated PCNA. Has almost no deubiquitinating activity by itself and requires the interaction with WDR48 to have a high activity. The sequence is that of Ubiquitin carboxyl-terminal hydrolase 1 from Rattus norvegicus (Rat).